We begin with the raw amino-acid sequence, 160 residues long: Small ribosomal subunit protein uS7 (160 aa).

The protein belongs to the universal ribosomal protein uS7 family. In terms of assembly, part of the 30S ribosomal subunit. Contacts proteins S9 and S11.

In terms of biological role, one of the primary rRNA binding proteins, it binds directly to 16S rRNA where it nucleates assembly of the head domain of the 30S subunit. Is located at the subunit interface close to the decoding center, probably blocks exit of the E-site tRNA. The polypeptide is Small ribosomal subunit protein uS7 (Rickettsia conorii (strain ATCC VR-613 / Malish 7)).